Here is a 482-residue protein sequence, read N- to C-terminus: Cysteine--tRNA ligase (482 aa).

C29 contacts Zn(2+). Residues 31 to 41 (PTVYDFAHIGN) carry the 'HIGH' region motif. Zn(2+)-binding residues include C224, H249, and E253. Residues 282–286 (KMSKS) carry the 'KMSKS' region motif. Position 285 (K285) interacts with ATP.

Belongs to the class-I aminoacyl-tRNA synthetase family. Monomer. Zn(2+) is required as a cofactor.

The protein resides in the cytoplasm. The catalysed reaction is tRNA(Cys) + L-cysteine + ATP = L-cysteinyl-tRNA(Cys) + AMP + diphosphate. This Nitrobacter hamburgensis (strain DSM 10229 / NCIMB 13809 / X14) protein is Cysteine--tRNA ligase.